Reading from the N-terminus, the 404-residue chain is Clavilactone A biosynthesis cluster protein Y (404 aa).

Functionally, part of the gene cluster that mediates the biosynthesis of clavilactone A, a meroterpenoid that features a unique benzo-fused ten-membered carbocyclic ring unit with an alpha,beta-epoxy-gamma-lactone moiety, forming an intriguing 10/5/3 tricyclic nested skeleton. ClaR, ClaS and ClaT are sufficient to produce clavilactone A and the function of claY, if any, has still to be identified. The biosynthesis begins with the prenyltransferase claS that transfers geranyl pyrophosphate (GPP) to hydroquinone to produces geranylhydroquinon. The cytochrome P450 monooxygenase claR then catalyzes the diradical coupling reaction between the intramolecular hydroquinone and allyl moieties to form the benzo-fused ten-membered carbocyclic ring unit of wigantol. Finally the cytochrome P450 monooxygenase claT exquisitely and stereoselectively assembles the alpha,beta-epoxy-gamma-lactone moiety, producing clavilactone A via arnebinol A. The protein is Clavilactone A biosynthesis cluster protein Y of Ampulloclitocybe clavipes (Club foot).